Reading from the N-terminus, the 331-residue chain is Putative sigma L-dependent transcriptional regulator YplP (331 aa).

The region spanning 12–213 is the Sigma-54 factor interaction domain; it reads HLIGEHQTFL…LKNAADYMAA (202 aa). Residue 95–104 coordinates ATP; sequence AVRGTLFLDD.

In terms of biological role, may play a role in cold adaptation. This is Putative sigma L-dependent transcriptional regulator YplP (yplP) from Bacillus subtilis (strain 168).